Here is a 183-residue protein sequence, read N- to C-terminus: ATP synthase subunit b, chloroplastic (183 aa).

Residues 25-45 (DILATNLINLTVVVGVLIFFG) form a helical membrane-spanning segment.

It belongs to the ATPase B chain family. F-type ATPases have 2 components, F(1) - the catalytic core - and F(0) - the membrane proton channel. F(1) has five subunits: alpha(3), beta(3), gamma(1), delta(1), epsilon(1). F(0) has four main subunits: a(1), b(1), b'(1) and c(10-14). The alpha and beta chains form an alternating ring which encloses part of the gamma chain. F(1) is attached to F(0) by a central stalk formed by the gamma and epsilon chains, while a peripheral stalk is formed by the delta, b and b' chains.

It is found in the plastid. Its subcellular location is the chloroplast thylakoid membrane. In terms of biological role, f(1)F(0) ATP synthase produces ATP from ADP in the presence of a proton or sodium gradient. F-type ATPases consist of two structural domains, F(1) containing the extramembraneous catalytic core and F(0) containing the membrane proton channel, linked together by a central stalk and a peripheral stalk. During catalysis, ATP synthesis in the catalytic domain of F(1) is coupled via a rotary mechanism of the central stalk subunits to proton translocation. Functionally, component of the F(0) channel, it forms part of the peripheral stalk, linking F(1) to F(0). In Sorghum bicolor (Sorghum), this protein is ATP synthase subunit b, chloroplastic.